The chain runs to 608 residues: Protoheme IX farnesyltransferase (608 aa).

The COX15/CtaA stretch occupies residues 1–304 (MKTPAWSRLA…VFLATSALER (304 aa)). 17 helical membrane-spanning segments follow: residues 10 to 30 (AGYA…GAYV), 67 to 87 (ATSG…LRAF), 99 to 119 (LALF…LFGW), 139 to 159 (TYFL…GGPL), 167 to 187 (VGLA…SGAV), 220 to 240 (VLHP…GYLV), 252 to 272 (LAQG…INVA), 277 to 297 (VWMQ…FVFL), 338 to 357 (VISL…AKGW), 362 to 384 (VFLA…NMVV), 411 to 431 (LLFA…GANL), 432 to 452 (LAAT…TLYL), 460 to 480 (IVIG…AVTG), 488 to 508 (YLFA…ALMI), 530 to 550 (VIQI…PLLL), 555 to 575 (LLYL…SLAL), and 584 to 604 (AVSL…AMAV). The protoheme IX prenyltransferase stretch occupies residues 339-606 (ISLLLFTALF…LLFAAMAVDR (268 aa)).

It in the N-terminal section; belongs to the COX15/CtaA family. The protein in the C-terminal section; belongs to the UbiA prenyltransferase family. Protoheme IX farnesyltransferase subfamily.

The protein resides in the cell inner membrane. The enzyme catalyses heme b + (2E,6E)-farnesyl diphosphate + H2O = Fe(II)-heme o + diphosphate. The protein operates within porphyrin-containing compound metabolism; heme O biosynthesis; heme O from protoheme: step 1/1. Its function is as follows. Converts heme B (protoheme IX) to heme O by substitution of the vinyl group on carbon 2 of heme B porphyrin ring with a hydroxyethyl farnesyl side group. The chain is Protoheme IX farnesyltransferase (ctaB) from Thermus thermophilus (strain ATCC BAA-163 / DSM 7039 / HB27).